A 414-amino-acid chain; its full sequence is HERV-H LTR-associating protein 2 (414 aa).

The N-terminal stretch at 1–22 is a signal peptide; that stretch reads MKAQTALSFFLILITSLSGSQG. Positions 61 to 131 constitute an Ig-like V-type 1 domain; the sequence is IHWKYQDSYK…YVGTAIQVIT (71 aa). N-linked (GlcNAc...) asparagine glycosylation is found at Asn90 and Asn103. An Ig-like C1-type domain is found at 138 to 222; it reads VGVFLTPVMK…ENSLLKQTWT (85 aa). Intrachain disulfides connect Cys159–Cys210 and Cys243–Cys317. Residues 235–328 form the Ig-like V-type 2 domain; that stretch reads QSEHVSLSCQ…ISSDEYTLLT (94 aa). N-linked (GlcNAc...) asparagine glycosylation is present at Asn318. The chain crosses the membrane as a helical span at residues 345–365; it reads KGLWILVPSAILAAFLLIWSV. Residues 383-414 are disordered; sequence GAQQERCCVPPGERCPSAPDNGEENVPLSGKV.

Interacts with TMIGD2. In terms of tissue distribution, expressed at high levels in colon, kidney, testis, lung and pancreas, and at lower levels in small intestine, liver and skeletal muscle. In immune cells, highly expressed in B-cells, dendritic cells and macrophages. Not detected in T-cells.

The protein resides in the membrane. Its function is as follows. Through interaction with TMIGD2, costimulates T-cells in the context of TCR-mediated activation. Enhances T-cell proliferation and cytokine production via an AKT-dependent signaling cascade. This chain is HERV-H LTR-associating protein 2 (HHLA2), found in Homo sapiens (Human).